We begin with the raw amino-acid sequence, 146 residues long: Putative type II restriction enzyme MjaORF1200P (146 aa).

This sequence to A.pernix APE2001.

The catalysed reaction is Endonucleolytic cleavage of DNA to give specific double-stranded fragments with terminal 5'-phosphates.. In terms of biological role, a putative type II restriction enzyme, its methylase would be M.MjaORF1200P (AC Q58600). The sequence is that of Putative type II restriction enzyme MjaORF1200P from Methanocaldococcus jannaschii (strain ATCC 43067 / DSM 2661 / JAL-1 / JCM 10045 / NBRC 100440) (Methanococcus jannaschii).